A 115-amino-acid polypeptide reads, in one-letter code: Arsenic resistance transcriptional regulator ArsR2 (115 aa).

Residues 1 to 90 enclose the HTH arsR-type domain; the sequence is MITPPDVFKS…EMLQVTLQAN (90 aa). Residues cysteine 30 and cysteine 32 each coordinate arsenite. A DNA-binding region (H-T-H motif) is located at residues 31–54; that stretch reads VCELMCALNDSQPKISRHLAQLRS.

Homodimer.

The protein resides in the cytoplasm. Functionally, binds arsenite and regulates the expression of arsenic efflux pumps. In vitro, also binds antimony and bismuth, but not arsenate. The chain is Arsenic resistance transcriptional regulator ArsR2 from Pseudomonas putida (strain ATCC 47054 / DSM 6125 / CFBP 8728 / NCIMB 11950 / KT2440).